The chain runs to 92 residues: Small ribosomal subunit protein bS20 (92 aa).

The tract at residues 1–22 (MANSPQSKKRARQAEARAAVNK) is disordered.

Belongs to the bacterial ribosomal protein bS20 family.

In terms of biological role, binds directly to 16S ribosomal RNA. The sequence is that of Small ribosomal subunit protein bS20 from Cereibacter sphaeroides (strain ATCC 17029 / ATH 2.4.9) (Rhodobacter sphaeroides).